The following is a 144-amino-acid chain: Glycophorin-A (144 aa).

A compositionally biased stretch (polar residues) spans serine 1 to serine 25. Residues serine 1–proline 55 form a disordered region. A glycan (O-linked (GalNAc...) serine) is linked at serine 2. O-linked (GalNAc...) threonine glycosylation is found at threonine 3, threonine 4, threonine 8, and threonine 10. O-linked (GalNAc...) serine glycosylation is found at serine 11, serine 12, serine 13, serine 14, serine 22, and serine 23. Residues threonine 30, threonine 36, threonine 38, threonine 44, and threonine 45 are each glycosylated (O-linked (GalNAc...) threonine). Residues serine 33–serine 48 are compositionally biased toward polar residues. Serine 48 is a glycosylation site (O-linked (GalNAc...) serine). The O-linked (GalNAc...) threonine glycan is linked to threonine 51. A helical membrane pass occupies residues leucine 70 to tyrosine 92. The interval serine 101 to serine 144 is disordered. Phosphoserine is present on serine 118. The span at glutamate 121–glutamate 130 shows a compositional bias: acidic residues.

The protein belongs to the glycophorin-A family. In terms of assembly, homodimer. Component of the ankyrin-1 complex in the erythrocyte, composed of ANK1, RHCE, RHAG, SLC4A1, EPB42, GYPA, GYPB and AQP1. Interacts with SLC4A1; a GYPA monomer is bound at each end of the SLC4A1 dimer forming a heterotetramer.

The protein resides in the membrane. Its function is as follows. Component of the ankyrin-1 complex, a multiprotein complex involved in the stability and shape of the erythrocyte membrane. Glycophorin A is the major intrinsic membrane protein of the erythrocyte. The N-terminal glycosylated segment, which lies outside the erythrocyte membrane, has MN blood group receptors. Appears to be important for the function of SLC4A1 and is required for high activity of SLC4A1. May be involved in translocation of SLC4A1 to the plasma membrane. The protein is Glycophorin-A of Macaca fuscata fuscata (Japanese macaque).